We begin with the raw amino-acid sequence, 253 residues long: Small ribosomal subunit protein eS6 (253 aa).

Residues Lys-200–Lys-253 form a disordered region. Over residues Val-226–Asp-247 the composition is skewed to basic and acidic residues.

It belongs to the eukaryotic ribosomal protein eS6 family. As to quaternary structure, component of the small ribosomal subunit. Part of the small subunit (SSU) processome, composed of more than 70 proteins and the RNA chaperone small nucleolar RNA (snoRNA) U3. Ribosomal protein S6 is the major substrate of protein kinases in eukaryote ribosomes.

The protein resides in the cytoplasm. The protein localises to the nucleus. It localises to the nucleolus. Component of the 40S small ribosomal subunit. Plays an important role in controlling cell growth and proliferation through the selective translation of particular classes of mRNA. Part of the small subunit (SSU) processome, first precursor of the small eukaryotic ribosomal subunit. During the assembly of the SSU processome in the nucleolus, many ribosome biogenesis factors, an RNA chaperone and ribosomal proteins associate with the nascent pre-rRNA and work in concert to generate RNA folding, modifications, rearrangements and cleavage as well as targeted degradation of pre-ribosomal RNA by the RNA exosome. The polypeptide is Small ribosomal subunit protein eS6 (RpS6) (Spodoptera frugiperda (Fall armyworm)).